The following is a 65-amino-acid chain: MSETITVNCPTCGKTVVWGEISPFRPFCSKRCQLIDLGEWAAEEKRIPSSSDLSESDDWSEEPKQ.

Positions 9, 12, 28, and 32 each coordinate Zn(2+). The disordered stretch occupies residues 44–65 (EKRIPSSSDLSESDDWSEEPKQ). Acidic residues predominate over residues 54–65 (SESDDWSEEPKQ).

It belongs to the DNA gyrase inhibitor YacG family. As to quaternary structure, interacts with GyrB. Zn(2+) is required as a cofactor.

Inhibits all the catalytic activities of DNA gyrase by preventing its interaction with DNA. Acts by binding directly to the C-terminal domain of GyrB, which probably disrupts DNA binding by the gyrase. The protein is DNA gyrase inhibitor YacG of Escherichia coli O6:H1 (strain CFT073 / ATCC 700928 / UPEC).